The following is a 281-amino-acid chain: MITSSDVSTIRAQVRSWRSQGESVAFVPTMGNLHQGHITLVKEAKLRAKHVVVSIFVNPMQFGQHEDLDAYPRTLAADSQALIDAGAALLFTPTAQTIYPKGLQQQTFVEVPEIGDVFCGASRPGHFRGVATIVCKLFNIVQPDIALFGRKDFQQLLVIKHMVNDLSLGIDIIGIDTIREASGLAMSSRNGYLTPEQKHTAATIKRALDLIANAVRQGEAIDKATAEGEAMIVQAGFKLDYLSVCNADNLHPAQADDKQLVILVAAYLGTTRLIDNLCFSR.

ATP is bound at residue 30–37 (MGNLHQGH). Catalysis depends on His37, which acts as the Proton donor. Position 61 (Gln61) interacts with (R)-pantoate. Gln61 contributes to the beta-alanine binding site. Residue 149–152 (GRKD) participates in ATP binding. Gln155 serves as a coordination point for (R)-pantoate. ATP contacts are provided by residues Ile178 and 186–189 (MSSR).

The protein belongs to the pantothenate synthetase family. In terms of assembly, homodimer.

The protein localises to the cytoplasm. It carries out the reaction (R)-pantoate + beta-alanine + ATP = (R)-pantothenate + AMP + diphosphate + H(+). The protein operates within cofactor biosynthesis; (R)-pantothenate biosynthesis; (R)-pantothenate from (R)-pantoate and beta-alanine: step 1/1. Functionally, catalyzes the condensation of pantoate with beta-alanine in an ATP-dependent reaction via a pantoyl-adenylate intermediate. In Shewanella denitrificans (strain OS217 / ATCC BAA-1090 / DSM 15013), this protein is Pantothenate synthetase.